Consider the following 124-residue polypeptide: Protein MT1307 (124 aa).

Residues 1-35 (MTTMITLRRRFAVAVAGVATAAATTVTLAPAPANA) constitute a signal peptide (tat-type signal).

The protein to M.tuberculosis Rv1813c. Predicted to be exported by the Tat system. The position of the signal peptide cleavage has not been experimentally proven.

This Mycobacterium tuberculosis (strain CDC 1551 / Oshkosh) protein is Protein MT1307.